We begin with the raw amino-acid sequence, 282 residues long: Nucleotide-binding protein ABO_0549 (282 aa).

8-15 (GRSGSGKT) contributes to the ATP binding site. Position 59 to 62 (59 to 62 (DARN)) interacts with GTP.

Belongs to the RapZ-like family.

Displays ATPase and GTPase activities. The polypeptide is Nucleotide-binding protein ABO_0549 (Alcanivorax borkumensis (strain ATCC 700651 / DSM 11573 / NCIMB 13689 / SK2)).